Consider the following 448-residue polypeptide: MLHRYLPMTEEDKQEMLKTIGVASIDDLFADIPEQVRFRGELKVKPAKSEPELWKELAALAEKNASVKQYVSFLGAGVYDHYIPAVVDHVLSRSEFYTAYTPYQPEISQGELQAIFEFQTMVCELTGMDVANSSMYDGGTALAEAVLLSAAHTKRKKVLISTAVHPQYREVVRTYAKGQKLEVKEIPYDGGITDLKALEAEMGDDVACVVVQYPNFFGQIEPLKAIAPLAHEKKSLFVVASNPLALGVLTPPGAFGADIVVGDMQPFGIPTQFGGPHCGYFAVKAPLMRKIPGRLVGQTTDEDGRRGFVLTLQAREQHIRRDKATSNICSNQALNALAASVALSALGKRGVKEMAAMNIQKAHYAKVELEKRGLSSPFAGPFFNEFVIRLGRPVSDVNDRLLEKGIIGGYDLGADYPELAGHMLVAVTELRTKEEIDRFVNELGDGHA.

The protein belongs to the GcvP family. N-terminal subunit subfamily. As to quaternary structure, the glycine cleavage system is composed of four proteins: P, T, L and H. In this organism, the P 'protein' is a heterodimer of two subunits.

It carries out the reaction N(6)-[(R)-lipoyl]-L-lysyl-[glycine-cleavage complex H protein] + glycine + H(+) = N(6)-[(R)-S(8)-aminomethyldihydrolipoyl]-L-lysyl-[glycine-cleavage complex H protein] + CO2. Its function is as follows. The glycine cleavage system catalyzes the degradation of glycine. The P protein binds the alpha-amino group of glycine through its pyridoxal phosphate cofactor; CO(2) is released and the remaining methylamine moiety is then transferred to the lipoamide cofactor of the H protein. This Geobacillus kaustophilus (strain HTA426) protein is Probable glycine dehydrogenase (decarboxylating) subunit 1.